The primary structure comprises 98 residues: Large ribosomal subunit protein mL53 (98 aa).

It belongs to the mitochondrion-specific ribosomal protein mL53 family. Component of the mitochondrial large ribosomal subunit (mt-LSU). Mature yeast 74S mitochondrial ribosomes consist of a small (37S) and a large (54S) subunit. The 37S small subunit contains a 15S ribosomal RNA (15S mt-rRNA) and 34 different proteins. The 54S large subunit contains a 21S rRNA (21S mt-rRNA) and 46 different proteins.

The protein resides in the mitochondrion. In terms of biological role, component of the mitochondrial ribosome (mitoribosome), a dedicated translation machinery responsible for the synthesis of mitochondrial genome-encoded proteins, including at least some of the essential transmembrane subunits of the mitochondrial respiratory chain. The mitoribosomes are attached to the mitochondrial inner membrane and translation products are cotranslationally integrated into the membrane. In Saccharomyces cerevisiae (strain ATCC 204508 / S288c) (Baker's yeast), this protein is Large ribosomal subunit protein mL53 (MRPL44).